A 466-amino-acid chain; its full sequence is MSEQKSSNQMWGGRFASGPDAIMEEINASIGFDRKLYAQDIQGSLAHAAMLAKTGIIAAEDHRQIEDGLKTILKEIEDGKFTFSRKLEDIHMNIEARLADLIGPSAGRLHTARSRNDQVAVDFRLWVKQELEKTAAALKNLIEAFLERAEEHAATVMPGFTHLQTAQPVTFGHHCMAYVEMFGRDLSRVRDAIERMDESPLGAAALAGTGFPIDRHMTAKALGFREPTRNSLDSVSDRDYALEFLSLAAICAGHLSRLAEEIVIWSTPQFNFVRLSDAFSTGSSIMPQKKNPDAAELVRAKTGRINGSLVALLTIMKGLPLAYSKDMQEDKEQVFDAAENLELAIAAMAGMVRDLTINVASMKKAAGSGYSTATDLADWLVRELGLPFREAHHVTGRAVALAESRKVDLAKLSLEELQSIHPGITDAIFGYLTVEKSVKSRQSFGGTAPQEVRRQIRYWKKRITKA.

It belongs to the lyase 1 family. Argininosuccinate lyase subfamily.

Its subcellular location is the cytoplasm. It catalyses the reaction 2-(N(omega)-L-arginino)succinate = fumarate + L-arginine. The protein operates within amino-acid biosynthesis; L-arginine biosynthesis; L-arginine from L-ornithine and carbamoyl phosphate: step 3/3. In Brucella anthropi (strain ATCC 49188 / DSM 6882 / CCUG 24695 / JCM 21032 / LMG 3331 / NBRC 15819 / NCTC 12168 / Alc 37) (Ochrobactrum anthropi), this protein is Argininosuccinate lyase.